Reading from the N-terminus, the 451-residue chain is Vitamin D3 receptor (451 aa).

The nuclear receptor DNA-binding region spans 44-112 (PRICGVCGDR…RLKRCVDIGM (69 aa)). Cys47, Cys50, Cys64, Cys67, Cys83, Cys89, Cys99, and Cys102 together coordinate Zn(2+). 2 consecutive NR C4-type zinc fingers follow at residues 47-67 (CGVC…CEGC) and 83-107 (CPFN…LKRC). Hinge regions lie at residues 113–149 (MKEF…KLSE) and 120–149 (DEEV…KLSE). Positions 150–447 (EQQKVIDTLL…LTPLVLEVFG (298 aa)) constitute an NR LBD domain. Residue Ser261 participates in calcitriol binding. Residues 270–288 (KMIPGFRDLTAEDQIALLK) form an interaction with coactivator LXXLL motif region. Calcitriol is bound by residues Arg298, Ser302, His329, and His421. The short motif at 440–448 (PLVLEVFGN) is the 9aaTAD element.

It belongs to the nuclear hormone receptor family. NR1 subfamily. As to quaternary structure, homodimer in the absence of bound vitamin D3. Heterodimer with RXRA after vitamin D3 binding. Expressed in kidney and intestine.

The protein localises to the nucleus. It localises to the cytoplasm. Its function is as follows. Nuclear receptor for calcitriol, the active form of vitamin D3 which mediates the action of this vitamin on cells. Enters the nucleus upon vitamin D3 binding where it forms heterodimers with the retinoid X receptor/RXR. The VDR-RXR heterodimers bind to specific response elements on DNA and activate the transcription of vitamin D3-responsive target genes. Plays a central role in calcium homeostasis. Also functions as a receptor for the secondary bile acid lithocholic acid (LCA) and its metabolites. The sequence is that of Vitamin D3 receptor (VDR) from Gallus gallus (Chicken).